A 64-amino-acid chain; its full sequence is Large ribosomal subunit protein bL35 (64 aa).

Basic residues predominate over residues 1 to 14 (MKNKTHKGTAKRVK). Positions 1–30 (MKNKTHKGTAKRVKVTGSGKLVREQANRRH) are disordered. Residues 21-30 (LVREQANRRH) show a composition bias toward basic and acidic residues.

The protein belongs to the bacterial ribosomal protein bL35 family.

This Corynebacterium efficiens (strain DSM 44549 / YS-314 / AJ 12310 / JCM 11189 / NBRC 100395) protein is Large ribosomal subunit protein bL35.